The following is a 199-amino-acid chain: V-set and transmembrane domain-containing protein 5 (199 aa).

The signal sequence occupies residues 1-27 (MRPLRCGERTQGIPLGLLAFWVTAARC). Residues 28 to 146 (LQSQGVSLYI…VSEIRYEDLH (119 aa)) are Extracellular-facing. The Ig-like C2-type domain occupies 35–138 (LYIPQSAINA…QSGTILLRVS (104 aa)). N-linked (GlcNAc...) asparagine glycosylation is found at Asn-43, Asn-87, and Asn-101. The helical transmembrane segment at 147-167 (FVAVFFALLAAVAVVLISLMW) threads the bilayer. The Cytoplasmic segment spans residues 168-199 (VCNQCAYKFQRKRRYKLKESTTEEIEMKEVEC). The tract at residues 169–185 (CNQCAYKFQRKRRYKLK) is important for CDC42-dependent filopodia induction.

Can homooligomerize through cis interactions within the same cell membrane. N-glycosylated. As to expression, highly expressed in the central nervous system (CNS), with the highest expression in thalamus, hippocampus, cerebrum, midbrain and spinal cord. Also highly expressed in stomach, kidney and small intestine.

The protein resides in the cell membrane. Its subcellular location is the cell projection. It is found in the dendrite. The protein localises to the axon. Cell adhesion-like membrane protein of the central nervous system (CNS) which modulates both the position and complexity of central neurons by altering their membrane morphology and dynamics. Involved in the formation of neuronal dendrites and protrusions including dendritic filopodia. In synaptogenesis, regulates synapse formation by altering dendritic spine morphology and actin distribution. Promotes formation of unstable neuronal spines such as thin and branched types. Regulates neuronal morphogenesis and migration during cortical development in the brain. This Mus musculus (Mouse) protein is V-set and transmembrane domain-containing protein 5.